The sequence spans 711 residues: Far upstream element-binding protein 2 (711 aa).

Positions 1 to 147 (MSDYSTGGPP…HPPPRTSMTE (147 aa)) are disordered. Serine 2 carries the post-translational modification N-acetylserine. The span at 8–17 (GPPPGPPPPA) shows a compositional bias: pro residues. 2 stretches are compositionally biased toward gly residues: residues 18-28 (GGGGGAGGAGG) and 36-68 (GAGDRGGGGPGGGGPGGGSAGGPSQPPGGGGPG). The residue at position 40 (arginine 40) is an Omega-N-methylarginine. An N6-acetyllysine modification is found at lysine 87. Residue serine 99 is modified to Phosphoserine. Threonine 100 bears the Phosphothreonine mark. Basic and acidic residues predominate over residues 110–122 (RQLEDGDQPESKK). A Glycyl lysine isopeptide (Lys-Gly) (interchain with G-Cter in SUMO1); alternate cross-link involves residue lysine 121. A Glycyl lysine isopeptide (Lys-Gly) (interchain with G-Cter in SUMO2); alternate cross-link involves residue lysine 121. Residues serine 125, serine 129, serine 131, serine 181, serine 184, serine 193, and serine 274 each carry the phosphoserine modification. 3 consecutive KH domains span residues 144–208 (SMTE…KMML), 233–299 (GTVQ…CEMV), and 322–386 (GGGI…ARII). The tract at residues 392–429 (SLRSGPPGPPGGPGMPPGGRGRGRGQGNWGPPGGEMTF) is disordered. Pro residues predominate over residues 397 to 407 (PPGPPGGPGMP). The segment covering 408-424 (PGGRGRGRGQGNWGPPG) has biased composition (gly residues). Omega-N-methylarginine occurs at positions 411, 413, 415, and 442. One can recognise a KH 4 domain in the interval 424–491 (GGEMTFSIPT…QQIDHAKQLI (68 aa)). Serine 480 is subject to Phosphoserine. Residues 497–569 (GPLCPVGPGP…HDPSKAAAAA (73 aa)) form a disordered region. Composition is skewed to pro residues over residues 501 to 520 (PVGPGPGGPGPAGPMGPFNP) and 528 to 542 (PGAPPHAGGPPPHQY). Copy 1 of the repeat occupies 571-582 (DPNAAWAAYYSH). The segment at 571 to 684 (DPNAAWAAYY…SAAWAEYYRQ (114 aa)) is 4 X 12 AA imperfect repeats. Positions 583 to 711 (YYQQPPGPVP…PTQQGQQQAQ (129 aa)) are disordered. Positions 587–613 (PPGPVPGPAPAPAAPPAQGEPPQPPPT) are enriched in pro residues. 3 tandem repeats follow at residues 617-628 (DYTKAWEEYYKK), 643-654 (DYTKAWEEYYKK), and 673-684 (DYSAAWAEYYRQ).

The protein belongs to the KHSRP family. As to quaternary structure, part of a ternary complex containing FUBP2, PTBP1, PTBP2 and HNRPH1. Interacts with PARN. Interacts with PQBP1. Post-translationally, phosphorylation at Ser-193 leads to the unfolding of the unstable KH domain 1, creating a site for 14-3-3 YWHAZ binding, which promotes nuclear localization and impairs the RNA degradation function. In terms of tissue distribution, detected in neural and non-neural cell lines.

The protein resides in the nucleus. Its subcellular location is the cytoplasm. Functionally, binds to the dendritic targeting element and may play a role in mRNA trafficking. Part of a ternary complex that binds to the downstream control sequence (DCS) of the pre-mRNA. Mediates exon inclusion in transcripts that are subject to tissue-specific alternative splicing. May interact with single-stranded DNA from the far-upstream element (FUSE). May activate gene expression. Also involved in degradation of inherently unstable mRNAs that contain AU-rich elements (AREs) in their 3'-UTR, possibly by recruiting degradation machinery to ARE-containing mRNAs. The protein is Far upstream element-binding protein 2 (KHSRP) of Homo sapiens (Human).